The sequence spans 243 residues: Mesoderm posterior protein 1 (243 aa).

A disordered region spans residues 1–86 (MAQPLCEPRS…QRQSASEREK (86 aa)). Over residues 27-36 (DGNSVCSPAW) the composition is skewed to polar residues. The bHLH domain occupies 76–130 (GQRQSASEREKLRMRTLARALHELRRFLPPSVAPTGQNLTKIETLRLAIRYIGHL). The CPLCP signature appears at 153–157 (CPLCP). The disordered stretch occupies residues 204-228 (AETASQERQEMEPSPSSPLFSSDML).

No expression was detected in adult tissues except the testis. Expression in the testis was regulated developmentally; expressed 2 weeks after birth, and increases, reaching the full expression level in mature testes.

It localises to the nucleus. Its function is as follows. Transcription factor. Plays a role in the epithelialization of somitic mesoderm and in the development of cardiac mesoderm. Defines the rostrocaudal patterning of the somites by participating in distinct Notch pathways. The polypeptide is Mesoderm posterior protein 1 (Mesp1) (Mus musculus (Mouse)).